The chain runs to 116 residues: Flagellar transcriptional regulator FlhD (116 aa).

This sequence belongs to the FlhD family. Homodimer; disulfide-linked. Forms a heterohexamer composed of two FlhC and four FlhD subunits. Each FlhC binds a FlhD dimer, forming a heterotrimer, and a hexamer assembles by dimerization of two heterotrimers.

The protein resides in the cytoplasm. Functionally, functions in complex with FlhC as a master transcriptional regulator that regulates transcription of several flagellar and non-flagellar operons by binding to their promoter region. Activates expression of class 2 flagellar genes, including fliA, which is a flagellum-specific sigma factor that turns on the class 3 genes. Also regulates genes whose products function in a variety of physiological pathways. In Proteus mirabilis (strain HI4320), this protein is Flagellar transcriptional regulator FlhD.